The chain runs to 211 residues: Protein-methionine-sulfoxide reductase heme-binding subunit MsrQ (211 aa).

4 helical membrane-spanning segments follow: residues 10–30 (WLKVCLHLAGLLPFLWLVWAI), 82–102 (LWCFAWATLHLTSYALLELGV), 116–136 (PYLTLGIISWIILLALAFTST), and 153–173 (FVYLVAILAPIHYLWSVKIIS).

Belongs to the MsrQ family. In terms of assembly, heterodimer of a catalytic subunit (MsrP) and a heme-binding subunit (MsrQ). FMN serves as cofactor. Requires heme b as cofactor.

Its subcellular location is the cell inner membrane. Functionally, part of the MsrPQ system that repairs oxidized periplasmic proteins containing methionine sulfoxide residues (Met-O), using respiratory chain electrons. Thus protects these proteins from oxidative-stress damage caused by reactive species of oxygen and chlorine generated by the host defense mechanisms. MsrPQ is essential for the maintenance of envelope integrity under bleach stress, rescuing a wide series of structurally unrelated periplasmic proteins from methionine oxidation, including the primary periplasmic chaperone SurA and the lipoprotein Pal. MsrQ provides electrons for reduction to the reductase catalytic subunit MsrP, using the quinone pool of the respiratory chain. In Escherichia coli O157:H7, this protein is Protein-methionine-sulfoxide reductase heme-binding subunit MsrQ.